The primary structure comprises 84 residues: LYR motif-containing protein 5B (84 aa).

It belongs to the complex I LYR family.

The protein is LYR motif-containing protein 5B (lyrm5b) of Danio rerio (Zebrafish).